Consider the following 174-residue polypeptide: Crossover junction endodeoxyribonuclease RuvC (174 aa).

Active-site residues include Asp8, Glu69, and Asp141. Mg(2+)-binding residues include Asp8, Glu69, and Asp141.

It belongs to the RuvC family. As to quaternary structure, homodimer which binds Holliday junction (HJ) DNA. The HJ becomes 2-fold symmetrical on binding to RuvC with unstacked arms; it has a different conformation from HJ DNA in complex with RuvA. In the full resolvosome a probable DNA-RuvA(4)-RuvB(12)-RuvC(2) complex forms which resolves the HJ. Mg(2+) serves as cofactor.

Its subcellular location is the cytoplasm. It catalyses the reaction Endonucleolytic cleavage at a junction such as a reciprocal single-stranded crossover between two homologous DNA duplexes (Holliday junction).. Its function is as follows. The RuvA-RuvB-RuvC complex processes Holliday junction (HJ) DNA during genetic recombination and DNA repair. Endonuclease that resolves HJ intermediates. Cleaves cruciform DNA by making single-stranded nicks across the HJ at symmetrical positions within the homologous arms, yielding a 5'-phosphate and a 3'-hydroxyl group; requires a central core of homology in the junction. The consensus cleavage sequence is 5'-(A/T)TT(C/G)-3'. Cleavage occurs on the 3'-side of the TT dinucleotide at the point of strand exchange. HJ branch migration catalyzed by RuvA-RuvB allows RuvC to scan DNA until it finds its consensus sequence, where it cleaves and resolves the cruciform DNA. This is Crossover junction endodeoxyribonuclease RuvC from Xanthomonas axonopodis pv. citri (strain 306).